The sequence spans 420 residues: Serine hydroxymethyltransferase (420 aa).

(6S)-5,6,7,8-tetrahydrofolate contacts are provided by residues Leu-121 and 125–127 (GHL). At Lys-230 the chain carries N6-(pyridoxal phosphate)lysine. (6S)-5,6,7,8-tetrahydrofolate-binding positions include Glu-246 and 354 to 356 (SPF).

Belongs to the SHMT family. As to quaternary structure, homodimer. Pyridoxal 5'-phosphate serves as cofactor.

Its subcellular location is the cytoplasm. It carries out the reaction (6R)-5,10-methylene-5,6,7,8-tetrahydrofolate + glycine + H2O = (6S)-5,6,7,8-tetrahydrofolate + L-serine. Its pathway is one-carbon metabolism; tetrahydrofolate interconversion. It functions in the pathway amino-acid biosynthesis; glycine biosynthesis; glycine from L-serine: step 1/1. Functionally, catalyzes the reversible interconversion of serine and glycine with tetrahydrofolate (THF) serving as the one-carbon carrier. This reaction serves as the major source of one-carbon groups required for the biosynthesis of purines, thymidylate, methionine, and other important biomolecules. Also exhibits THF-independent aldolase activity toward beta-hydroxyamino acids, producing glycine and aldehydes, via a retro-aldol mechanism. The protein is Serine hydroxymethyltransferase of Rickettsia peacockii (strain Rustic).